The sequence spans 285 residues: Bis(5'-nucleosyl)-tetraphosphatase, symmetrical (285 aa).

It belongs to the Ap4A hydrolase family.

It carries out the reaction P(1),P(4)-bis(5'-adenosyl) tetraphosphate + H2O = 2 ADP + 2 H(+). Hydrolyzes diadenosine 5',5'''-P1,P4-tetraphosphate to yield ADP. This chain is Bis(5'-nucleosyl)-tetraphosphatase, symmetrical, found in Colwellia psychrerythraea (strain 34H / ATCC BAA-681) (Vibrio psychroerythus).